The sequence spans 268 residues: Tetraspanin-33 (268 aa).

Topologically, residues 1–23 (MVRKSPGSGKEEDFTFISPVVKY) are cytoplasmic. Residues 24–44 (LLIFFNMLFWVISMVMVGIGV) traverse the membrane as a helical segment. Residues 45-63 (YARLLKHAEAAMACLAVDP) lie on the Extracellular side of the membrane. The chain crosses the membrane as a helical span at residues 64–84 (ALLLIGVGILMFLITFCGCIG). Topologically, residues 85–95 (SLRENICLLQT) are cytoplasmic. Residues 96–116 (FSICLTLVFLLQLAVGIVGFI) traverse the membrane as a helical segment. The Extracellular segment spans residues 117–226 (FSDKARGKVS…FIHTNGCIDR (110 aa)). 4 disulfide bridges follow: Cys-155–Cys-223, Cys-156–Cys-188, Cys-172–Cys-182, and Cys-189–Cys-202. N-linked (GlcNAc...) asparagine glycans are attached at residues Asn-171 and Asn-176. A helical membrane pass occupies residues 227–247 (LVNWIHSNLFLLGGVALGLAI). At 248–268 (PQVTKHLRAKLIYTWRIGIQV) the chain is on the cytoplasmic side.

This sequence belongs to the tetraspanin (TM4SF) family. As to quaternary structure, homodimer; disulfide-linked.

It localises to the cell membrane. The protein resides in the cell junction. The protein localises to the adherens junction. It is found in the cytoplasm. In terms of biological role, part of TspanC8 subgroup, composed of 6 members that interact with the transmembrane metalloprotease ADAM10. This interaction is required for ADAM10 exit from the endoplasmic reticulum and for enzymatic maturation and trafficking to the cell surface as well as substrate specificity. Different TspanC8/ADAM10 complexes have distinct substrates. The chain is Tetraspanin-33 (tspan33) from Xenopus laevis (African clawed frog).